Consider the following 1068-residue polypeptide: Target of Nesh-SH3 (1068 aa).

The signal sequence occupies residues 1–21 (MLSSLGCLLLCGSITLALGNA). A glycan (N-linked (GlcNAc...) asparagine) is linked at Asn37. Positions 116–214 (KPLQLVVGTL…KIFNHKTVVG (99 aa)) constitute a Fibronectin type-III 1 domain. Disordered stretches follow at residues 315-351 (SKTP…DVSE) and 384-811 (VFSS…SITD). The segment covering 326–339 (RPTTVTPETVPRST) has biased composition (low complexity). Residues 340-351 (KPTTSSALDVSE) are compositionally biased toward polar residues. Low complexity predominate over residues 447 to 462 (QPTTPAPQQTTSIPST). The segment covering 463-473 (PKRRPRPKPPR) has biased composition (basic residues). Polar residues predominate over residues 482-499 (AGTITPKISKSPEPTWTT). Residues 532-544 (RAPPKPKTSPRPR) show a composition bias toward pro residues. Over residues 562–574 (PKTSPSPEVSYTT) the composition is skewed to polar residues. Low complexity-rich tracts occupy residues 603–631 (IPFI…STQE) and 737–750 (PPLR…GTPL). Positions 802-811 (PDNSPCSITD) are enriched in polar residues. Residues 833-926 (PPTNLTVVTV…NTVAFSTESA (94 aa)) enclose the Fibronectin type-III 2 domain.

As to quaternary structure, probably interacts with ABI3. In terms of tissue distribution, expressed in brain, heart, lung, liver, pancreas kidney and placenta.

The protein localises to the secreted. The polypeptide is Target of Nesh-SH3 (Homo sapiens (Human)).